The following is a 285-amino-acid chain: Ribosomal protein L11 methyltransferase (285 aa).

Thr-131, Gly-154, Asp-176, and Asn-223 together coordinate S-adenosyl-L-methionine.

The protein belongs to the methyltransferase superfamily. PrmA family.

The protein localises to the cytoplasm. The catalysed reaction is L-lysyl-[protein] + 3 S-adenosyl-L-methionine = N(6),N(6),N(6)-trimethyl-L-lysyl-[protein] + 3 S-adenosyl-L-homocysteine + 3 H(+). Its function is as follows. Methylates ribosomal protein L11. In Brucella melitensis biotype 2 (strain ATCC 23457), this protein is Ribosomal protein L11 methyltransferase.